The primary structure comprises 173 residues: T-cell receptor beta-2 chain C region (173 aa).

The c region stretch occupies residues 1–146; that stretch reads EDLRNVTPPK…GVLSATILYE (146 aa). N67 and N116 each carry an N-linked (GlcNAc...) asparagine glycan. A helical membrane pass occupies residues 147-168; the sequence is ILLGKATLYAVLVSGLVLMAMV. At 169–173 the chain is on the cytoplasmic side; sequence KKKNS.

The protein localises to the membrane. This chain is T-cell receptor beta-2 chain C region, found in Mus musculus (Mouse).